A 363-amino-acid chain; its full sequence is Transcription factor PIF6 (363 aa).

2 disordered regions span residues 154 to 204 (SEGS…RNDI) and 340 to 363 (IPNP…KTNR). The span at 178–188 (RTRKALVKRKR) shows a compositional bias: basic residues. Positions 188–237 (RNAEAYNSPERNQRNDINKKMRTLQNLLPNSHKDDNESMLDEAINYMTNL) constitute a bHLH domain. Residues 340–350 (IPNPNSLSNLD) are compositionally biased toward polar residues. Residues 354 to 363 (LHKKSRKTNR) are compositionally biased toward basic residues.

As to quaternary structure, homodimer. Interacts with APRR1/TOC1. Binds to RGL2 and RGA. Associates to PTAC12/HMR/PAP5 which acts as a transcriptional coactivator. As to expression, mainly expressed in fruits and flowers and, to a lower extent, in leaves, stems, seedlings and roots.

Its subcellular location is the nucleus. Its function is as follows. Transcription factor. In Arabidopsis thaliana (Mouse-ear cress), this protein is Transcription factor PIF6.